A 220-amino-acid chain; its full sequence is Protein GrpE (220 aa).

The tract at residues 1–55 is disordered; sequence MCGGDVQGQGVASGCDEALERADSLRASDPVPVESGEGSVPGEHSQELETGASEE.

The protein belongs to the GrpE family. In terms of assembly, homodimer.

The protein localises to the cytoplasm. Participates actively in the response to hyperosmotic and heat shock by preventing the aggregation of stress-denatured proteins, in association with DnaK and GrpE. It is the nucleotide exchange factor for DnaK and may function as a thermosensor. Unfolded proteins bind initially to DnaJ; upon interaction with the DnaJ-bound protein, DnaK hydrolyzes its bound ATP, resulting in the formation of a stable complex. GrpE releases ADP from DnaK; ATP binding to DnaK triggers the release of the substrate protein, thus completing the reaction cycle. Several rounds of ATP-dependent interactions between DnaJ, DnaK and GrpE are required for fully efficient folding. In Treponema pallidum (strain Nichols), this protein is Protein GrpE.